A 379-amino-acid chain; its full sequence is Homoserine O-succinyltransferase (379 aa).

In terms of domain architecture, AB hydrolase-1 spans 51–360; the sequence is NAVLICHALS…DAPQGHDAFL (310 aa). Residue serine 157 is the Nucleophile of the active site. Residue arginine 227 participates in substrate binding. Active-site residues include aspartate 323 and histidine 356. Aspartate 357 is a binding site for substrate.

The protein belongs to the AB hydrolase superfamily. MetX family. As to quaternary structure, homodimer.

It localises to the cytoplasm. The catalysed reaction is L-homoserine + succinyl-CoA = O-succinyl-L-homoserine + CoA. Its pathway is amino-acid biosynthesis; L-methionine biosynthesis via de novo pathway; O-succinyl-L-homoserine from L-homoserine: step 1/1. In terms of biological role, transfers a succinyl group from succinyl-CoA to L-homoserine, forming succinyl-L-homoserine. This is Homoserine O-succinyltransferase from Pseudomonas fluorescens (strain Pf0-1).